The sequence spans 80 residues: Conotoxin Ca11.3 (80 aa).

A signal peptide spans 1 to 19 (MKLVLAIVVILMLLSLSTG). A propeptide spanning residues 20–42 (AEMSDNHASRSATALRDRLLSPK) is cleaved from the precursor. 4 disulfide bridges follow: Cys46-Cys60, Cys53-Cys65, Cys59-Cys72, and Cys64-Cys79.

The protein belongs to the conotoxin I3 superfamily. As to expression, expressed by the venom duct.

Its subcellular location is the secreted. The polypeptide is Conotoxin Ca11.3 (Conus caracteristicus (Characteristic cone)).